The following is a 694-amino-acid chain: Frizzled-8 (694 aa).

Positions 1-27 (MEWGYLLEVTSLLAALALLQRSSGAAA) are cleaved as a signal peptide. Over 28 to 275 (ASAKELACQE…NPFFSQDERA (248 aa)) the chain is Extracellular. Residues 30–151 (AKELACQEIT…GNPDTLCMDY (122 aa)) enclose the FZ domain. Cystine bridges form between Cys35/Cys96, Cys43/Cys89, Cys80/Cys118, Cys107/Cys148, and Cys111/Cys135. N-linked (GlcNAc...) asparagine glycosylation occurs at Asn49. Position 71-78 (71-78 (QFWPLVEI)) interacts with hexadecanoate. Residues 95–100 (ICLEDY) form a wnt-binding region. The segment at 147–152 (LCMDYN) is wnt-binding. The N-linked (GlcNAc...) asparagine glycan is linked to Asn152. The interval 155 to 226 (DLTTAAPSPP…KARPPGGGAA (72 aa)) is disordered. Over residues 161–175 (PSPPRRLPPPPPGEQ) the composition is skewed to pro residues. Positions 176–186 (PPSGSGHGRPP) are enriched in low complexity. The segment covering 210 to 225 (RGGGGGGKARPPGGGA) has biased composition (gly residues). The helical transmembrane segment at 276-296 (FTVFWIGLWSVLCFVSTFATV) threads the bilayer. Residues 297-312 (STFLIDMERFKYPERP) are Cytoplasmic-facing. A helical transmembrane segment spans residues 313 to 333 (IIFLSACYLFVSVGYLVRLVA). Topologically, residues 334-396 (GHEKVACSGG…RYETTGPALC (63 aa)) are extracellular. A helical membrane pass occupies residues 397-417 (TVVFLLVYFFGMASSIWWVIL). Residues 418–439 (SLTWFLAAGMKWGNEAIAGYSQ) are Cytoplasmic-facing. A helical transmembrane segment spans residues 440–460 (YFHLAAWLVPSVKSIAVLALS). The Extracellular portion of the chain corresponds to 461 to 483 (SVDGDPVAGICYVGNQSLDNLRG). The N-linked (GlcNAc...) asparagine glycan is linked to Asn475. The chain crosses the membrane as a helical span at residues 484 to 504 (FVLAPLVIYLFIGTMFLLAGF). Residues 505–532 (VSLFRIRSVIKQQDGPTKTHKLEKLMIR) are Cytoplasmic-facing. The helical transmembrane segment at 533–553 (LGLFTVLYTVPAAVVVACLFY) threads the bilayer. Residues 554-584 (EQHNRPRWEATHNCPCLRDLQPDQARRPDYA) lie on the Extracellular side of the membrane. The chain crosses the membrane as a helical span at residues 585 to 605 (VFMLKYFMCLVVGITSGVWVW). The Cytoplasmic segment spans residues 606 to 694 (SGKTLESWRS…YPKQMPLSQV (89 aa)). Residues 608–613 (KTLESW) carry the Lys-Thr-X-X-X-Trp motif, mediates interaction with the PDZ domain of Dvl family members motif. A compositionally biased stretch (gly residues) spans 648–664 (GGGGPGGGGGPGGGGGS). Residues 648-668 (GGGGPGGGGGPGGGGGSLYSD) form a disordered region. Positions 692–694 (SQV) match the PDZ-binding motif.

It belongs to the G-protein coupled receptor Fz/Smo family. Component of a Wnt-signaling complex that contains a WNT protein, a FZD protein and LRP5 or LRP6. Interacts directly with LRP5 or LRP6; the interaction is promoted by Wnt-binding and signaling and inhibited by DKK1. Interacts with GPOC, RSPO1 and RSPO3. Interacts with glypican GPC3. Ubiquitinated by ZNRF3, leading to its degradation by the proteasome. As to expression, most abundant in fetal kidney, followed by brain and lung. In adult tissues, expressed in kidney, heart, pancreas and skeletal muscle.

The protein localises to the membrane. The protein resides in the golgi apparatus. It is found in the cell membrane. In terms of biological role, receptor for Wnt proteins. Component of the Wnt-Fzd-LRP5-LRP6 complex that triggers beta-catenin signaling through inducing aggregation of receptor-ligand complexes into ribosome-sized signalosomes. The beta-catenin canonical signaling pathway leads to the activation of disheveled proteins, inhibition of GSK-3 kinase, nuclear accumulation of beta-catenin and activation of Wnt target genes. A second signaling pathway involving PKC and calcium fluxes has been seen for some family members, but it is not yet clear if it represents a distinct pathway or if it can be integrated in the canonical pathway, as PKC seems to be required for Wnt-mediated inactivation of GSK-3 kinase. Both pathways seem to involve interactions with G-proteins. May be involved in transduction and intercellular transmission of polarity information during tissue morphogenesis and/or in differentiated tissues. Coreceptor along with RYK of Wnt proteins, such as WNT1. The protein is Frizzled-8 (FZD8) of Homo sapiens (Human).